The sequence spans 771 residues: Putative 8-amino-7-oxononanoate synthase 2 (771 aa).

A unknown region spans residues 1-418 (MPTGLGYDFL…TVKAAELGEI (418 aa)). R407 lines the substrate pocket. Residues 419–771 (VLLGTNSYLG…EDLTPQGAAL (353 aa)) form a KAPA synthase region. Residue 485-486 (GY) coordinates pyridoxal 5'-phosphate. H510 contacts substrate. Residues S556 and 581–584 (DESH) each bind pyridoxal 5'-phosphate. At K615 the chain carries N6-(pyridoxal phosphate)lysine.

In the C-terminal section; belongs to the class-II pyridoxal-phosphate-dependent aminotransferase family. BioF subfamily. Requires pyridoxal 5'-phosphate as cofactor.

The catalysed reaction is 6-carboxyhexanoyl-[ACP] + L-alanine + H(+) = (8S)-8-amino-7-oxononanoate + holo-[ACP] + CO2. Catalyzes the decarboxylative condensation of pimeloyl-[acyl-carrier protein] and L-alanine to produce 8-amino-7-oxononanoate (AON), [acyl-carrier protein], and carbon dioxide. The sequence is that of Putative 8-amino-7-oxononanoate synthase 2 (bioF2) from Mycobacterium tuberculosis (strain CDC 1551 / Oshkosh).